Reading from the N-terminus, the 668-residue chain is tRNA 5-methylaminomethyl-2-thiouridine biosynthesis bifunctional protein MnmC (668 aa).

The tract at residues 1 to 245 (MKHYSIQPAN…KREMLCGVME (245 aa)) is tRNA (mnm(5)s(2)U34)-methyltransferase. The tract at residues 270–668 (IGGGIASALL…LLKGKAVKAG (399 aa)) is FAD-dependent cmnm(5)s(2)U34 oxidoreductase.

This sequence in the N-terminal section; belongs to the methyltransferase superfamily. tRNA (mnm(5)s(2)U34)-methyltransferase family. The protein in the C-terminal section; belongs to the DAO family. The cofactor is FAD.

The protein resides in the cytoplasm. It catalyses the reaction 5-aminomethyl-2-thiouridine(34) in tRNA + S-adenosyl-L-methionine = 5-methylaminomethyl-2-thiouridine(34) in tRNA + S-adenosyl-L-homocysteine + H(+). Its function is as follows. Catalyzes the last two steps in the biosynthesis of 5-methylaminomethyl-2-thiouridine (mnm(5)s(2)U) at the wobble position (U34) in tRNA. Catalyzes the FAD-dependent demodification of cmnm(5)s(2)U34 to nm(5)s(2)U34, followed by the transfer of a methyl group from S-adenosyl-L-methionine to nm(5)s(2)U34, to form mnm(5)s(2)U34. This chain is tRNA 5-methylaminomethyl-2-thiouridine biosynthesis bifunctional protein MnmC, found in Shigella dysenteriae serotype 1 (strain Sd197).